The following is a 132-amino-acid chain: Small ribosomal subunit protein uS8c (132 aa).

The protein belongs to the universal ribosomal protein uS8 family. Part of the 30S ribosomal subunit.

It localises to the plastid. The protein resides in the chloroplast. Its function is as follows. One of the primary rRNA binding proteins, it binds directly to 16S rRNA central domain where it helps coordinate assembly of the platform of the 30S subunit. The chain is Small ribosomal subunit protein uS8c (rps8) from Buxus microphylla (Littleleaf boxwood).